The primary structure comprises 515 residues: 2-isopropylmalate synthase (515 aa).

The region spanning 4 to 266 (ISVFDTTLRD…ETGLILKEIK (263 aa)) is the Pyruvate carboxyltransferase domain. Mn(2+) is bound by residues Asp13, His201, His203, and Asn237. The segment at 391–515 (ELQTLQVNYG…AEVYGSKVEV (125 aa)) is regulatory domain.

The protein belongs to the alpha-IPM synthase/homocitrate synthase family. LeuA type 1 subfamily. As to quaternary structure, homodimer. Mn(2+) serves as cofactor.

Its subcellular location is the cytoplasm. It carries out the reaction 3-methyl-2-oxobutanoate + acetyl-CoA + H2O = (2S)-2-isopropylmalate + CoA + H(+). It functions in the pathway amino-acid biosynthesis; L-leucine biosynthesis; L-leucine from 3-methyl-2-oxobutanoate: step 1/4. Its function is as follows. Catalyzes the condensation of the acetyl group of acetyl-CoA with 3-methyl-2-oxobutanoate (2-ketoisovalerate) to form 3-carboxy-3-hydroxy-4-methylpentanoate (2-isopropylmalate). In Halalkalibacterium halodurans (strain ATCC BAA-125 / DSM 18197 / FERM 7344 / JCM 9153 / C-125) (Bacillus halodurans), this protein is 2-isopropylmalate synthase.